The chain runs to 246 residues: Chemokine-binding protein (246 aa).

Residues 108–125 (SESSDGNTVNTRLSSVSP) show a composition bias toward polar residues. The tract at residues 108–132 (SESSDGNTVNTRLSSVSPGQGKDSP) is disordered.

Belongs to the orthopoxvirus OPG001 family.

The protein localises to the secreted. Its function is as follows. Inhibits host immune defense by binding to host chemokines. Binds host CC chemokines (beta chemokines) such as RANTES with high affinity, but not CXC or C chemokines (alpha and gamma chemokines). This Monkeypox virus protein is Chemokine-binding protein (OPG001).